The primary structure comprises 87 residues: Large ribosomal subunit protein bL27 (87 aa).

Residues 1 to 23 (MAHKKGTGSTRNGRDSNAQRLGV) form a disordered region. Residues 7–19 (TGSTRNGRDSNAQ) show a composition bias toward polar residues.

This sequence belongs to the bacterial ribosomal protein bL27 family.

The polypeptide is Large ribosomal subunit protein bL27 (rpmA) (Synechocystis sp. (strain ATCC 27184 / PCC 6803 / Kazusa)).